The chain runs to 222 residues: RNA chaperone ProQ (222 aa).

A compositionally biased stretch (basic and acidic residues) spans 94 to 113 (EHADHAKQQLDESKAKAAEK). The tract at residues 94–171 (EHADHAKQQL…PAKLTDSDLQ (78 aa)) is disordered. Residues 114 to 131 (RKAKLAQQPKRKDKRQFN) are compositionally biased toward basic residues. Residues 133 to 148 (PKGEKSANSDHADTKR) show a composition bias toward basic and acidic residues. Over residues 155–164 (NRPNTTPPAK) the composition is skewed to low complexity.

It belongs to the ProQ family.

It localises to the cytoplasm. In terms of biological role, RNA chaperone with significant RNA binding, RNA strand exchange and RNA duplexing activities. The polypeptide is RNA chaperone ProQ (Alteromonas mediterranea (strain DSM 17117 / CIP 110805 / LMG 28347 / Deep ecotype)).